The sequence spans 231 residues: Extracellular deoxyribonuclease (231 aa).

Residues 1–20 (MMIFRFVTTLAASLPLLTFA) form the signal peptide.

It belongs to the EndA/NucM nuclease family.

It is found in the secreted. In Vibrio cholerae serotype O1 (strain ATCC 39315 / El Tor Inaba N16961), this protein is Extracellular deoxyribonuclease (dns).